Reading from the N-terminus, the 324-residue chain is Glyoxylate/hydroxypyruvate reductase B (324 aa).

Active-site residues include Arg237 and Glu266. His285 functions as the Proton donor in the catalytic mechanism.

This sequence belongs to the D-isomer specific 2-hydroxyacid dehydrogenase family. GhrB subfamily. In terms of assembly, homodimer.

Its subcellular location is the cytoplasm. It catalyses the reaction glycolate + NADP(+) = glyoxylate + NADPH + H(+). It carries out the reaction (R)-glycerate + NAD(+) = 3-hydroxypyruvate + NADH + H(+). The catalysed reaction is (R)-glycerate + NADP(+) = 3-hydroxypyruvate + NADPH + H(+). In terms of biological role, catalyzes the NADPH-dependent reduction of glyoxylate and hydroxypyruvate into glycolate and glycerate, respectively. The protein is Glyoxylate/hydroxypyruvate reductase B of Escherichia coli O9:H4 (strain HS).